Here is a 351-residue protein sequence, read N- to C-terminus: Peptidyl-Lys metalloendopeptidase (351 aa).

An N-terminal signal peptide occupies residues 1-22; the sequence is MFSLSSRFFLYSLCLSAVAVSA. Positions 23–183 are excised as a propeptide; it reads APGLSLSLSG…VARRSNLGKR (161 aa). Cystine bridges form between cysteine 189-cysteine 259 and cysteine 261-cysteine 281. Residue histidine 301 coordinates Zn(2+). Residue glutamate 302 is part of the active site. Zn(2+)-binding residues include histidine 305 and aspartate 314.

This sequence belongs to the peptidase M35 family. The cofactor is Zn(2+).

The protein localises to the secreted. It carries out the reaction Preferential cleavage in proteins: -Xaa-|-Lys- (in which Xaa may be Pro).. With respect to regulation, inhibited by chelating agents such as imidazole, alpha,alpha'-bipyridine, and 1,10-phenanthroline. The sequence is that of Peptidyl-Lys metalloendopeptidase (MEP) from Armillaria mellea (Honey mushroom).